We begin with the raw amino-acid sequence, 157 residues long: UPF0756 membrane protein BH3161 (157 aa).

Helical transmembrane passes span 1–21 (MISQATIFMLVLLVIALLAKN), 54–74 (LGVTIITIAVLTPIATGEIGF), 87–107 (WVALLSGVVVALIAASGIDLL), and 117–137 (LVLGTILAVAVFNGVAVGPLI).

The protein belongs to the UPF0756 family.

The protein resides in the cell membrane. This Halalkalibacterium halodurans (strain ATCC BAA-125 / DSM 18197 / FERM 7344 / JCM 9153 / C-125) (Bacillus halodurans) protein is UPF0756 membrane protein BH3161.